Consider the following 149-residue polypeptide: Large ribosomal subunit protein bL9 (149 aa).

This sequence belongs to the bacterial ribosomal protein bL9 family.

Its function is as follows. Binds to the 23S rRNA. This chain is Large ribosomal subunit protein bL9, found in Legionella pneumophila (strain Lens).